Reading from the N-terminus, the 100-residue chain is Large ribosomal subunit protein uL23 (100 aa).

It belongs to the universal ribosomal protein uL23 family. As to quaternary structure, part of the 50S ribosomal subunit. Contacts protein L29, and trigger factor when it is bound to the ribosome.

Its function is as follows. One of the early assembly proteins it binds 23S rRNA. One of the proteins that surrounds the polypeptide exit tunnel on the outside of the ribosome. Forms the main docking site for trigger factor binding to the ribosome. This Shewanella amazonensis (strain ATCC BAA-1098 / SB2B) protein is Large ribosomal subunit protein uL23.